The sequence spans 486 residues: Glutamyl-tRNA(Gln) amidotransferase subunit A (486 aa).

Catalysis depends on charge relay system residues K79 and S154. Residue S178 is the Acyl-ester intermediate of the active site.

It belongs to the amidase family. GatA subfamily. Heterotrimer of A, B and C subunits.

The enzyme catalyses L-glutamyl-tRNA(Gln) + L-glutamine + ATP + H2O = L-glutaminyl-tRNA(Gln) + L-glutamate + ADP + phosphate + H(+). Allows the formation of correctly charged Gln-tRNA(Gln) through the transamidation of misacylated Glu-tRNA(Gln) in organisms which lack glutaminyl-tRNA synthetase. The reaction takes place in the presence of glutamine and ATP through an activated gamma-phospho-Glu-tRNA(Gln). This chain is Glutamyl-tRNA(Gln) amidotransferase subunit A, found in Dehalococcoides mccartyi (strain ATCC BAA-2266 / KCTC 15142 / 195) (Dehalococcoides ethenogenes (strain 195)).